Reading from the N-terminus, the 172-residue chain is Ribosome maturation factor RimM (172 aa).

The 73-residue stretch at 96-168 folds into the PRC barrel domain; it reads EGEFYYHQII…RVDVELMEGL (73 aa).

The protein belongs to the RimM family. Binds ribosomal protein uS19.

It localises to the cytoplasm. Its function is as follows. An accessory protein needed during the final step in the assembly of 30S ribosomal subunit, possibly for assembly of the head region. Essential for efficient processing of 16S rRNA. May be needed both before and after RbfA during the maturation of 16S rRNA. It has affinity for free ribosomal 30S subunits but not for 70S ribosomes. The protein is Ribosome maturation factor RimM of Streptococcus pyogenes serotype M28 (strain MGAS6180).